Reading from the N-terminus, the 120-residue chain is Ribonuclease P protein component (120 aa).

The protein belongs to the RnpA family. As to quaternary structure, consists of a catalytic RNA component (M1 or rnpB) and a protein subunit.

It carries out the reaction Endonucleolytic cleavage of RNA, removing 5'-extranucleotides from tRNA precursor.. RNaseP catalyzes the removal of the 5'-leader sequence from pre-tRNA to produce the mature 5'-terminus. It can also cleave other RNA substrates such as 4.5S RNA. The protein component plays an auxiliary but essential role in vivo by binding to the 5'-leader sequence and broadening the substrate specificity of the ribozyme. The chain is Ribonuclease P protein component from Latilactobacillus sakei subsp. sakei (strain 23K) (Lactobacillus sakei subsp. sakei).